The chain runs to 215 residues: Nascent polypeptide-associated complex subunit alpha (215 aa).

Positions 1-81 (MPGEATETVP…SEKKARKAMS (81 aa)) are disordered. A compositionally biased stretch (polar residues) spans 9 to 21 (VPVTEQEMQQPQV). Residues 29 to 42 (SDSDDSVPELEEQD) show a composition bias toward acidic residues. The segment covering 43–57 (SAQTQTQQAQLAAAA) has biased composition (low complexity). The NAC-A/B domain maps to 70 to 135 (SRSEKKARKA…AKIEDLSQQA (66 aa)). A UBA domain is found at 176 to 213 (VEVKDIELVMSQANVSRAKAVRALKNNNNDIVNAIMEL).

Belongs to the NAC-alpha family.

May promote appropriate targeting of ribosome-nascent polypeptide complexes. This is Nascent polypeptide-associated complex subunit alpha (naca) from Oreochromis niloticus (Nile tilapia).